Consider the following 249-residue polypeptide: MNKFNIENLDLFYGQNQALKNINLPIPAKQVTALIGPSGCGKSTLLRCLNRMNDLIEGVKITGLVNLDGNDIYGNIDVADLRIKVGMVFQKANPFPMSIYENVAYGLKAQGVKDKKVLDAVVEKSLRGAALWDEVKDRLKSHAFGLSGGQQQRLCIARTIAMEPDVILMDEPTSALDPIATHKVEELMETLKKDYTIVIVTHSMQQARRISDKTAFFLMGELVEHDDTQIIFSNPKDDRTQGYVNGDFG.

The 241-residue stretch at 4-244 folds into the ABC transporter domain; it reads FNIENLDLFY…PKDDRTQGYV (241 aa). 36 to 43 is a binding site for ATP; sequence GPSGCGKS.

This sequence belongs to the ABC transporter superfamily. Phosphate importer (TC 3.A.1.7) family. As to quaternary structure, the complex is composed of two ATP-binding proteins (PstB), two transmembrane proteins (PstC and PstA) and a solute-binding protein (PstS).

It localises to the cell inner membrane. The enzyme catalyses phosphate(out) + ATP + H2O = ADP + 2 phosphate(in) + H(+). Functionally, part of the ABC transporter complex PstSACB involved in phosphate import. Responsible for energy coupling to the transport system. The protein is Phosphate import ATP-binding protein PstB 1 of Aliivibrio fischeri (strain ATCC 700601 / ES114) (Vibrio fischeri).